The primary structure comprises 436 residues: 3-ketoacyl-CoA thiolase (436 aa).

Catalysis depends on Cys-99, which acts as the Acyl-thioester intermediate. Catalysis depends on proton acceptor residues His-392 and Cys-422.

The protein belongs to the thiolase-like superfamily. Thiolase family. As to quaternary structure, heterotetramer of two alpha chains (FadJ) and two beta chains (FadI).

The protein resides in the cytoplasm. The catalysed reaction is an acyl-CoA + acetyl-CoA = a 3-oxoacyl-CoA + CoA. It functions in the pathway lipid metabolism; fatty acid beta-oxidation. In terms of biological role, catalyzes the final step of fatty acid oxidation in which acetyl-CoA is released and the CoA ester of a fatty acid two carbons shorter is formed. The protein is 3-ketoacyl-CoA thiolase of Salmonella heidelberg (strain SL476).